The sequence spans 311 residues: Ribosomal protein L11 methyltransferase (311 aa).

S-adenosyl-L-methionine is bound by residues T162, G183, D205, and N248.

The protein belongs to the methyltransferase superfamily. PrmA family.

It is found in the cytoplasm. It carries out the reaction L-lysyl-[protein] + 3 S-adenosyl-L-methionine = N(6),N(6),N(6)-trimethyl-L-lysyl-[protein] + 3 S-adenosyl-L-homocysteine + 3 H(+). Methylates ribosomal protein L11. In Bacillus pumilus (strain SAFR-032), this protein is Ribosomal protein L11 methyltransferase.